A 183-amino-acid chain; its full sequence is ATP synthase subunit b, chloroplastic (183 aa).

Residues 20–42 form a helical membrane-spanning segment; that stretch reads INTNVFETNIINLAIVVGTLFYY.

Belongs to the ATPase B chain family. As to quaternary structure, F-type ATPases have 2 components, F(1) - the catalytic core - and F(0) - the membrane proton channel. F(1) has five subunits: alpha(3), beta(3), gamma(1), delta(1), epsilon(1). F(0) has four main subunits: a(1), b(1), b'(1) and c(10-14). The alpha and beta chains form an alternating ring which encloses part of the gamma chain. F(1) is attached to F(0) by a central stalk formed by the gamma and epsilon chains, while a peripheral stalk is formed by the delta, b and b' chains.

Its subcellular location is the plastid. It localises to the chloroplast thylakoid membrane. Its function is as follows. F(1)F(0) ATP synthase produces ATP from ADP in the presence of a proton or sodium gradient. F-type ATPases consist of two structural domains, F(1) containing the extramembraneous catalytic core and F(0) containing the membrane proton channel, linked together by a central stalk and a peripheral stalk. During catalysis, ATP synthesis in the catalytic domain of F(1) is coupled via a rotary mechanism of the central stalk subunits to proton translocation. Component of the F(0) channel, it forms part of the peripheral stalk, linking F(1) to F(0). The polypeptide is ATP synthase subunit b, chloroplastic (Euglena gracilis).